Here is a 280-residue protein sequence, read N- to C-terminus: Phosphatidylglycerol--prolipoprotein diacylglyceryl transferase (280 aa).

Helical transmembrane passes span 59-79 and 97-117; these read FLTW…ILFY and GGMS…LFTW. Position 142 (R142) interacts with a 1,2-diacyl-sn-glycero-3-phospho-(1'-sn-glycerol). Helical transmembrane passes span 207–227 and 233–253; these read GFLA…CECF and FIGF…PMAI.

This sequence belongs to the Lgt family.

The protein resides in the cell inner membrane. The enzyme catalyses L-cysteinyl-[prolipoprotein] + a 1,2-diacyl-sn-glycero-3-phospho-(1'-sn-glycerol) = an S-1,2-diacyl-sn-glyceryl-L-cysteinyl-[prolipoprotein] + sn-glycerol 1-phosphate + H(+). The protein operates within protein modification; lipoprotein biosynthesis (diacylglyceryl transfer). In terms of biological role, catalyzes the transfer of the diacylglyceryl group from phosphatidylglycerol to the sulfhydryl group of the N-terminal cysteine of a prolipoprotein, the first step in the formation of mature lipoproteins. In Gluconacetobacter diazotrophicus (strain ATCC 49037 / DSM 5601 / CCUG 37298 / CIP 103539 / LMG 7603 / PAl5), this protein is Phosphatidylglycerol--prolipoprotein diacylglyceryl transferase.